Here is a 74-residue protein sequence, read N- to C-terminus: Conotoxin MiK41 (74 aa).

The signal sequence occupies residues 1 to 22 (MKLTCVLIITVLFLTACQLTTA). The propeptide occupies 23–45 (VTYSRGEHKHRALMSTGTNYRLP). Intrachain disulfides connect cysteine 48/cysteine 62, cysteine 55/cysteine 66, and cysteine 61/cysteine 73.

Belongs to the conotoxin O1 superfamily. In terms of tissue distribution, expressed by the venom duct.

The protein localises to the secreted. This Conus miles (Soldier cone) protein is Conotoxin MiK41.